The sequence spans 277 residues: Phycobilisome rod-core linker polypeptide CpcG1 (277 aa).

The region spanning 11–189 (RTLDQRVVSY…YWRNKEISLS (179 aa)) is the PBS-linker domain.

This sequence belongs to the phycobilisome linker protein family. In terms of assembly, the phycobilisome is a hemidiscoidal structure that is composed of two distinct substructures: a core complex and a number of rods radiating from the core.

The protein resides in the cellular thylakoid membrane. Rod-core linker protein required for attachment of phycocyanin to allophycocyanin in cores of phycobilisomes. Functionally, linker polypeptides determine the state of aggregation and the location of the disk-shaped phycobiliprotein units within the phycobilisome and modulate their spectroscopic properties in order to mediate a directed and optimal energy transfer. This Thermosynechococcus vestitus (strain NIES-2133 / IAM M-273 / BP-1) protein is Phycobilisome rod-core linker polypeptide CpcG1 (cpcG1).